A 1577-amino-acid polypeptide reads, in one-letter code: Vacuolar protein sorting/targeting protein PEP1 (1577 aa).

An N-terminal signal peptide occupies residues 1–21 (MILLHFVYSLWALLLIPLINA). Topologically, residues 22–1391 (EEFTPKVTKT…EFKEKYSVSA (1370 aa)) are lumenal. BNR repeat units lie at residues 58–68 (ISFDDGETWEK) and 101–111 (YITNDQGKSWE). Asn-121 and Asn-168 each carry an N-linked (GlcNAc...) asparagine glycan. BNR repeat units lie at residues 179–187 (SNDGGKSFS) and 414–423 (ISVDNGLTWT). N-linked (GlcNAc...) asparagine glycosylation occurs at Asn-445. BNR repeat units lie at residues 485–495 (FISRDGGLTWK), 531–541 (YYSLDQGKTWT), and 762–771 (YISHDGGQTI). An N-linked (GlcNAc...) asparagine glycan is attached at Asn-791. The stretch at 859–869 (YLTNDGGETFT) is one BNR 8 repeat. An N-linked (GlcNAc...) asparagine glycan is attached at Asn-1008. BNR repeat units follow at residues 1141–1150 (FFTTDGGETW) and 1183–1192 (YSTDFGKTWK). An N-linked (GlcNAc...) asparagine glycan is attached at Asn-1301. A helical transmembrane segment spans residues 1392-1412 (GPFAFIFISILLIIFFAAWFV). The Cytoplasmic segment spans residues 1413–1577 (YDRGIRRNGG…DSTAPSNENQ (165 aa)). Positions 1531-1577 (DDVPTLEEEHTSYTDQPTTTDVPDALPEGNEENIDRPDSTAPSNENQ) are disordered.

This sequence belongs to the VPS10-related sortilin family.

The protein localises to the golgi apparatus. Its subcellular location is the trans-Golgi network membrane. It localises to the prevacuolar compartment membrane. Its function is as follows. Functions as a sorting receptor in the Golgi compartment required for the intracellular sorting and delivery of soluble vacuolar proteins, like carboxypeptidase Y (CPY) and proteinase A. Executes multiple rounds of sorting by cycling between the late Golgi and a prevacuolar endosome-like compartment. Binds the Golgi-modified P2 form of CPY, and this interaction is dependent on the presence of an intact CPY vacuolar protein sorting signal. This chain is Vacuolar protein sorting/targeting protein PEP1 (PEP1), found in Saccharomyces cerevisiae (strain Lalvin EC1118 / Prise de mousse) (Baker's yeast).